Consider the following 1112-residue polypeptide: DNA repair protein rad13 (1112 aa).

The N-domain stretch occupies residues 1–95 (MGVSGLWDIL…QTIQKRQARR (95 aa)). Mg(2+)-binding residues include Asp-30 and Asp-77. The 20-residue stretch at 395–414 (TDDLILQLATQQSLEENKKS) folds into the UIM domain. The tract at residues 742–870 (KRSEKRDADE…LALEILHEFP (129 aa)) is I-domain. Residues Glu-777, Glu-779, Asp-798, Asp-800, and Asp-849 each contribute to the Mg(2+) site. The segment at 1056–1112 (KMMASKNSSDSDSDSEDNFLASLTPKTNSSSISIENLPRKTKLSTSLLKKPSKRRRK) is disordered. Residues 1079–1089 (TPKTNSSSISI) show a composition bias toward polar residues.

It belongs to the XPG/RAD2 endonuclease family. XPG subfamily. It depends on Mg(2+) as a cofactor.

It is found in the nucleus. Its function is as follows. Single-stranded DNA endonuclease involved in excision repair of DNA damaged with UV light, bulky adducts, or cross-linking agents. Essential for the incision step of excision-repair. In Schizosaccharomyces pombe (strain 972 / ATCC 24843) (Fission yeast), this protein is DNA repair protein rad13 (rad13).